Reading from the N-terminus, the 454-residue chain is Probable glycine dehydrogenase (decarboxylating) subunit 1 (454 aa).

It belongs to the GcvP family. N-terminal subunit subfamily. The glycine cleavage system is composed of four proteins: P, T, L and H. In this organism, the P 'protein' is a heterodimer of two subunits.

The enzyme catalyses N(6)-[(R)-lipoyl]-L-lysyl-[glycine-cleavage complex H protein] + glycine + H(+) = N(6)-[(R)-S(8)-aminomethyldihydrolipoyl]-L-lysyl-[glycine-cleavage complex H protein] + CO2. In terms of biological role, the glycine cleavage system catalyzes the degradation of glycine. The P protein binds the alpha-amino group of glycine through its pyridoxal phosphate cofactor; CO(2) is released and the remaining methylamine moiety is then transferred to the lipoamide cofactor of the H protein. The polypeptide is Probable glycine dehydrogenase (decarboxylating) subunit 1 (Sorangium cellulosum (strain So ce56) (Polyangium cellulosum (strain So ce56))).